We begin with the raw amino-acid sequence, 548 residues long: Chaperonin GroEL (548 aa).

ATP contacts are provided by residues 30–33 (TLGP), K51, 87–91 (DGTTT), G415, and D494.

The protein belongs to the chaperonin (HSP60) family. As to quaternary structure, forms a cylinder of 14 subunits composed of two heptameric rings stacked back-to-back. Interacts with the co-chaperonin GroES.

The protein localises to the cytoplasm. The catalysed reaction is ATP + H2O + a folded polypeptide = ADP + phosphate + an unfolded polypeptide.. Functionally, together with its co-chaperonin GroES, plays an essential role in assisting protein folding. The GroEL-GroES system forms a nano-cage that allows encapsulation of the non-native substrate proteins and provides a physical environment optimized to promote and accelerate protein folding. The protein is Chaperonin GroEL of Oleispira antarctica.